Consider the following 493-residue polypeptide: Glutamyl-tRNA(Gln) amidotransferase subunit A (493 aa).

Active-site charge relay system residues include Lys79 and Ser159. Ser183 (acyl-ester intermediate) is an active-site residue.

This sequence belongs to the amidase family. GatA subfamily. In terms of assembly, heterotrimer of A, B and C subunits.

It catalyses the reaction L-glutamyl-tRNA(Gln) + L-glutamine + ATP + H2O = L-glutaminyl-tRNA(Gln) + L-glutamate + ADP + phosphate + H(+). Functionally, allows the formation of correctly charged Gln-tRNA(Gln) through the transamidation of misacylated Glu-tRNA(Gln) in organisms which lack glutaminyl-tRNA synthetase. The reaction takes place in the presence of glutamine and ATP through an activated gamma-phospho-Glu-tRNA(Gln). In Brucella abortus (strain S19), this protein is Glutamyl-tRNA(Gln) amidotransferase subunit A.